The following is a 146-amino-acid chain: 3-hydroxyacyl-[acyl-carrier-protein] dehydratase FabZ (146 aa).

The active site involves histidine 48.

Belongs to the thioester dehydratase family. FabZ subfamily.

The protein localises to the cytoplasm. It carries out the reaction a (3R)-hydroxyacyl-[ACP] = a (2E)-enoyl-[ACP] + H2O. Involved in unsaturated fatty acids biosynthesis. Catalyzes the dehydration of short chain beta-hydroxyacyl-ACPs and long chain saturated and unsaturated beta-hydroxyacyl-ACPs. This Acetivibrio thermocellus (strain ATCC 27405 / DSM 1237 / JCM 9322 / NBRC 103400 / NCIMB 10682 / NRRL B-4536 / VPI 7372) (Clostridium thermocellum) protein is 3-hydroxyacyl-[acyl-carrier-protein] dehydratase FabZ.